Consider the following 103-residue polypeptide: Histone H4 (103 aa).

The span at 1–14 shows a compositional bias: gly residues; it reads MTGRGKGGKGLGKG. The interval 1–20 is disordered; sequence MTGRGKGGKGLGKGGAKRHR. An N6-acetyl-N6-methyllysine; alternate mark is found at Lys6 and Lys13. Residues 17 to 21 mediate DNA binding; that stretch reads KRHRK.

This sequence belongs to the histone H4 family. The nucleosome is a histone octamer containing two molecules each of H2A, H2B, H3 and H4 assembled in one H3-H4 heterotetramer and two H2A-H2B heterodimers. The octamer wraps approximately 147 bp of DNA.

The protein localises to the nucleus. Its subcellular location is the chromosome. Its function is as follows. Core component of nucleosome. Nucleosomes wrap and compact DNA into chromatin, limiting DNA accessibility to the cellular machineries which require DNA as a template. Histones thereby play a central role in transcription regulation, DNA repair, DNA replication and chromosomal stability. DNA accessibility is regulated via a complex set of post-translational modifications of histones, also called histone code, and nucleosome remodeling. This chain is Histone H4 (His4), found in Myrmica ruginodis (Red ant).